The sequence spans 695 residues: Protein EARLY FLOWERING 3 (695 aa).

A compositionally biased stretch (basic and acidic residues) spans 1–11 (MKRGKDEEKIL). 5 disordered regions span residues 1 to 33 (MKRGKDEEKILEPMFPRLHVNDADKGGPRAPPR), 48 to 75 (RFGDHGTMNSRSNNTSTLVHPGPSSQPC), 136 to 159 (RSQSHGRTKSGIEKEKHTPMVAPS), 216 to 283 (EKSA…REYS), and 541 to 653 (CSSQ…QTTR). Over residues 54–74 (TMNSRSNNTSTLVHPGPSSQP) the composition is skewed to polar residues. 3 stretches are compositionally biased toward basic and acidic residues: residues 216–226 (EKSASSHDRVN), 234–253 (QESRNRLYRDGGKTRLKDTD), and 260–283 (LATENHSQEGHGSPEDIDNDREYS). The interval 261–484 (ATENHSQEGH…VMSPSEGLIY (224 aa)) is interaction with ELF3. Composition is skewed to polar residues over residues 551-567 (PNEQMNQFGHPGNLQNT) and 579-588 (APQQQQQPTK). Low complexity-rich tracts occupy residues 598–616 (QGSTGSSPSGPQGISGSKS) and 636–653 (TMTTTTTTTRTTVTQTTR).

In terms of assembly, interacts specifically with both Pr and Pfr forms of phytochrome B. Interacts with ELF4. May form a homodimer.

Its subcellular location is the nucleus. In terms of biological role, may be a transcription factor part of a circadian clock input pathway. Acts within a 'zeitnehmer' feedback loop and is involved in its own circadian regulation. Has no role in regulating circadian clock function in the dark. Part of a corepressor complex consisting of ELF4, ELF3, and LUX involved in the transcriptional regulation of APRR9. The activity of the protein may be decreased in long day conditions due to its interaction with phytochrome B (phyB). Can regulate the initiation of flowering independently of phyB. Also involved in responses to nematode parasitism, like the formation of the nematode feeding structure. The polypeptide is Protein EARLY FLOWERING 3 (ELF3) (Arabidopsis thaliana (Mouse-ear cress)).